Consider the following 331-residue polypeptide: Glyceraldehyde-3-phosphate dehydrogenase (331 aa).

NAD(+) is bound by residues 11-12 (RI), D33, and R78. Residues 148–150 (SCT), T179, 208–209 (TG), and R231 each bind D-glyceraldehyde 3-phosphate. The Nucleophile role is filled by C149. Residue N313 participates in NAD(+) binding.

This sequence belongs to the glyceraldehyde-3-phosphate dehydrogenase family. Homotetramer.

The protein localises to the cytoplasm. It carries out the reaction D-glyceraldehyde 3-phosphate + phosphate + NAD(+) = (2R)-3-phospho-glyceroyl phosphate + NADH + H(+). It participates in carbohydrate degradation; glycolysis; pyruvate from D-glyceraldehyde 3-phosphate: step 1/5. The sequence is that of Glyceraldehyde-3-phosphate dehydrogenase (GPD) from Eremothecium gossypii (strain ATCC 10895 / CBS 109.51 / FGSC 9923 / NRRL Y-1056) (Yeast).